The chain runs to 480 residues: ESX-1 secretion system ATPase EccB1 (480 aa).

A helical membrane pass occupies residues 44-64 (IALGIVVAVLILAGAALLAYF). The tract at residues 461-480 (DTLPADPSPRKVPAGASGAP) is disordered.

This sequence belongs to the EccB family. Part of the ESX-1 / type VII secretion system (T7SS), which is composed of cytosolic and membrane components. The ESX-1 membrane complex is composed of EccB1, EccCa1, EccCb1, EccD1 and EccE1.

Its subcellular location is the cell inner membrane. In terms of biological role, an ATPase. Part of the ESX-1 specialized secretion system, which delivers several virulence factors to host cells during infection, including the key virulence factors EsxA (ESAT-6) and EsxB (CFP-10). The sequence is that of ESX-1 secretion system ATPase EccB1 from Mycobacterium tuberculosis (strain CDC 1551 / Oshkosh).